The chain runs to 473 residues: 3-isopropylmalate dehydratase large subunit (473 aa).

[4Fe-4S] cluster-binding residues include Cys-354, Cys-414, and Cys-417.

This sequence belongs to the aconitase/IPM isomerase family. LeuC type 1 subfamily. Heterodimer of LeuC and LeuD. Requires [4Fe-4S] cluster as cofactor.

It carries out the reaction (2R,3S)-3-isopropylmalate = (2S)-2-isopropylmalate. It participates in amino-acid biosynthesis; L-leucine biosynthesis; L-leucine from 3-methyl-2-oxobutanoate: step 2/4. In terms of biological role, catalyzes the isomerization between 2-isopropylmalate and 3-isopropylmalate, via the formation of 2-isopropylmaleate. This is 3-isopropylmalate dehydratase large subunit from Rhodopseudomonas palustris (strain BisB18).